Consider the following 168-residue polypeptide: Photosystem I assembly protein Ycf3 (168 aa).

3 TPR repeats span residues 35 to 68, 72 to 105, and 120 to 153; these read AFTY…EIDP, SYIL…NPFL, and GEQA…TPGN.

This sequence belongs to the Ycf3 family.

The protein localises to the plastid. The protein resides in the chloroplast thylakoid membrane. Functionally, essential for the assembly of the photosystem I (PSI) complex. May act as a chaperone-like factor to guide the assembly of the PSI subunits. This chain is Photosystem I assembly protein Ycf3, found in Oenothera elata subsp. hookeri (Hooker's evening primrose).